Reading from the N-terminus, the 283-residue chain is Urease accessory protein UreD (283 aa).

Residues 1–21 are disordered; the sequence is MTQTQPVGTLRLTIDDQGPQG.

This sequence belongs to the UreD family. As to quaternary structure, ureD, UreF and UreG form a complex that acts as a GTP-hydrolysis-dependent molecular chaperone, activating the urease apoprotein by helping to assemble the nickel containing metallocenter of UreC. The UreE protein probably delivers the nickel.

It localises to the cytoplasm. Probably acts in the maturation of urease via the functional incorporation of the urease nickel metallocenter. Required for urease expression. In Corynebacterium glutamicum (strain ATCC 13032 / DSM 20300 / JCM 1318 / BCRC 11384 / CCUG 27702 / LMG 3730 / NBRC 12168 / NCIMB 10025 / NRRL B-2784 / 534), this protein is Urease accessory protein UreD.